An 85-amino-acid polypeptide reads, in one-letter code: Large ribosomal subunit protein bL27 (85 aa).

The disordered stretch occupies residues 1 to 20; that stretch reads MAHKKAGGSTRNGRDSEAKR.

This sequence belongs to the bacterial ribosomal protein bL27 family.

This Salmonella agona (strain SL483) protein is Large ribosomal subunit protein bL27.